The primary structure comprises 1136 residues: Unconventional myosin-Ib (1136 aa).

Residues 15-701 form the Myosin motor domain; it reads IGVGDTVLLE…TLFQLEDLRK (687 aa). A Phosphoserine modification is found at Ser-60. 108-115 contacts ATP; it reads GESGAGKT. Residue Lys-287 forms a Glycyl lysine isopeptide (Lys-Gly) (interchain with G-Cter in SUMO1); alternate linkage. A Glycyl lysine isopeptide (Lys-Gly) (interchain with G-Cter in SUMO2); alternate cross-link involves residue Lys-287. The segment at 592–599 is actin-binding; the sequence is YIRCIKPN. IQ domains are found at residues 704–729, 730–750, 750–778, 780–807, 808–837, and 837–866; these read LEDL…LMKR, SQVV…YQQI, IKSS…HQKR, KEAA…DEAR, NKHA…EARR, and RKHA…ANAG. One can recognise a TH1 domain in the interval 952 to 1136; the sequence is KALYPSSVGQ…NNRLLEVAVP (185 aa).

The protein belongs to the TRAFAC class myosin-kinesin ATPase superfamily. Myosin family.

In terms of biological role, motor protein that may participate in process critical to neuronal development and function such as cell migration, neurite outgrowth and vesicular transport. This chain is Unconventional myosin-Ib (Myo1b), found in Rattus norvegicus (Rat).